The primary structure comprises 272 residues: Large ribosomal subunit protein uL29m (272 aa).

3 disordered regions span residues methionine 1–glutamine 29, lysine 56–lysine 87, and alanine 227–leucine 272. Over residues serine 17–glutamine 29 the composition is skewed to low complexity. 2 stretches are compositionally biased toward low complexity: residues alanine 227–glutamate 238 and proline 249–threonine 259. Over residues isoleucine 260–leucine 272 the composition is skewed to polar residues.

This sequence belongs to the universal ribosomal protein uL29 family. As to quaternary structure, component of the mitochondrial large ribosomal subunit. Mature mitochondrial ribosomes consist of a small (37S) and a large (54S) subunit. The 37S subunit contains at least 33 different proteins and 1 molecule of RNA (15S). The 54S subunit contains at least 45 different proteins and 1 molecule of RNA (21S).

The protein localises to the mitochondrion. This chain is Large ribosomal subunit protein uL29m (MRPL4), found in Chaetomium globosum (strain ATCC 6205 / CBS 148.51 / DSM 1962 / NBRC 6347 / NRRL 1970) (Soil fungus).